The primary structure comprises 802 residues: Phenylalanine--tRNA ligase beta subunit (802 aa).

The tRNA-binding domain maps to 40 to 155; that stretch reads SASLKNVVVG…AHVETGVSAI (116 aa). The B5 domain occupies 409-484; it reads KAVNKIETSL…RIYGYDEIPV (76 aa). Mg(2+) contacts are provided by Asp-462, Asp-468, Glu-471, and Glu-472. The 94-residue stretch at 709–802 folds into the FDX-ACB domain; sequence PRYPEMTRDL…LQEKLHAIIR (94 aa).

This sequence belongs to the phenylalanyl-tRNA synthetase beta subunit family. Type 1 subfamily. In terms of assembly, tetramer of two alpha and two beta subunits. The cofactor is Mg(2+).

Its subcellular location is the cytoplasm. It catalyses the reaction tRNA(Phe) + L-phenylalanine + ATP = L-phenylalanyl-tRNA(Phe) + AMP + diphosphate + H(+). In Listeria monocytogenes serotype 4b (strain F2365), this protein is Phenylalanine--tRNA ligase beta subunit.